The following is a 381-amino-acid chain: Chorismate synthase (381 aa).

2 residues coordinate NADP(+): Arg41 and Arg47. FMN is bound by residues 127–129 (RAS), 247–248 (QA), Gly291, 306–310 (KPIPT), and Arg332.

It belongs to the chorismate synthase family. Homotetramer. It depends on FMNH2 as a cofactor.

The enzyme catalyses 5-O-(1-carboxyvinyl)-3-phosphoshikimate = chorismate + phosphate. It participates in metabolic intermediate biosynthesis; chorismate biosynthesis; chorismate from D-erythrose 4-phosphate and phosphoenolpyruvate: step 7/7. In terms of biological role, catalyzes the anti-1,4-elimination of the C-3 phosphate and the C-6 proR hydrogen from 5-enolpyruvylshikimate-3-phosphate (EPSP) to yield chorismate, which is the branch point compound that serves as the starting substrate for the three terminal pathways of aromatic amino acid biosynthesis. This reaction introduces a second double bond into the aromatic ring system. This Anaeromyxobacter dehalogenans (strain 2CP-1 / ATCC BAA-258) protein is Chorismate synthase.